The sequence spans 129 residues: Histone H2A type 2-C (129 aa).

Positions 1–22 (MSGRGKQGGKARAKAKSRSSRA) are disordered. The residue at position 2 (Ser-2) is an N-acetylserine. Position 2 is a phosphoserine; by RPS6KA5 (Ser-2). Arg-4 carries the post-translational modification Citrulline; alternate. Position 4 is a symmetric dimethylarginine; by PRMT5; alternate (Arg-4). N6-(2-hydroxyisobutyryl)lysine; alternate is present on residues Lys-6 and Lys-10. Lys-6 carries the post-translational modification N6-acetyllysine; alternate. The span at 7-19 (QGGKARAKAKSRS) shows a compositional bias: basic residues. N6-lactoyllysine; alternate is present on Lys-10. Lys-10 carries the post-translational modification N6-succinyllysine; alternate. Glycyl lysine isopeptide (Lys-Gly) (interchain with G-Cter in ubiquitin) cross-links involve residues Lys-14 and Lys-16. An N6-(2-hydroxyisobutyryl)lysine; alternate modification is found at Lys-37. Lys-37 carries the post-translational modification N6-(beta-hydroxybutyryl)lysine; alternate. Lys-37 is subject to N6-crotonyllysine; alternate. N6-(2-hydroxyisobutyryl)lysine occurs at positions 75 and 76. Lys-96 is subject to N6-(2-hydroxyisobutyryl)lysine; alternate. Lys-96 carries the N6-succinyllysine; alternate modification. N6-glutaryllysine; alternate is present on Lys-96. The residue at position 100 (Lys-100) is an N6-glutaryllysine. Gln-105 is modified (N5-methylglutamine). Lys-119 bears the N6-(2-hydroxyisobutyryl)lysine; alternate mark. Lys-119 and Lys-120 each carry N6-crotonyllysine; alternate. Lys-119 and Lys-120 each carry N6-glutaryllysine; alternate. A Glycyl lysine isopeptide (Lys-Gly) (interchain with G-Cter in ubiquitin); alternate cross-link involves residue Lys-120. Thr-121 bears the Phosphothreonine; by DCAF1 mark. Ser-123 carries the post-translational modification Phosphoserine. Lys-125 carries the N6-crotonyllysine modification.

Belongs to the histone H2A family. The nucleosome is a histone octamer containing two molecules each of H2A, H2B, H3 and H4 assembled in one H3-H4 heterotetramer and two H2A-H2B heterodimers. The octamer wraps approximately 147 bp of DNA. Post-translationally, deiminated on Arg-4 in granulocytes upon calcium entry. In terms of processing, monoubiquitination of Lys-120 (H2AK119Ub) by RING1, TRIM37 and RNF2/RING2 complex gives a specific tag for epigenetic transcriptional repression and participates in X chromosome inactivation of female mammals. It is involved in the initiation of both imprinted and random X inactivation. Ubiquitinated H2A is enriched in inactive X chromosome chromatin. Ubiquitination of H2A functions downstream of methylation of 'Lys-27' of histone H3 (H3K27me). H2AK119Ub by RNF2/RING2 can also be induced by ultraviolet and may be involved in DNA repair. Following DNA double-strand breaks (DSBs), it is ubiquitinated through 'Lys-63' linkage of ubiquitin moieties by the E2 ligase UBE2N and the E3 ligases RNF8 and RNF168, leading to the recruitment of repair proteins to sites of DNA damage. Ubiquitination at Lys-14 and Lys-16 (H2AK13Ub and H2AK15Ub, respectively) in response to DNA damage is initiated by RNF168 that mediates monoubiquitination at these 2 sites, and 'Lys-63'-linked ubiquitin are then conjugated to monoubiquitin; RNF8 is able to extend 'Lys-63'-linked ubiquitin chains in vitro. H2AK119Ub and ionizing radiation-induced 'Lys-63'-linked ubiquitination (H2AK13Ub and H2AK15Ub) are distinct events. Phosphorylation on Ser-2 (H2AS1ph) is enhanced during mitosis. Phosphorylation on Ser-2 by RPS6KA5/MSK1 directly represses transcription. Acetylation of H3 inhibits Ser-2 phosphorylation by RPS6KA5/MSK1. Phosphorylation at Thr-121 (H2AT120ph) by DCAF1 is present in the regulatory region of many tumor suppresor genes and down-regulates their transcription. Post-translationally, symmetric dimethylation on Arg-4 by the PRDM1/PRMT5 complex may play a crucial role in the germ-cell lineage. In terms of processing, glutamine methylation at Gln-105 (H2AQ104me) by FBL is specifically dedicated to polymerase I. It is present at 35S ribosomal DNA locus and impairs binding of the FACT complex. Crotonylation (Kcr) is specifically present in male germ cells and marks testis-specific genes in post-meiotic cells, including X-linked genes that escape sex chromosome inactivation in haploid cells. Crotonylation marks active promoters and enhancers and confers resistance to transcriptional repressors. It is also associated with post-meiotically activated genes on autosomes. Post-translationally, lactylated in macrophages by EP300/P300 by using lactoyl-CoA directly derived from endogenous or exogenous lactate, leading to stimulates gene transcription.

It localises to the nucleus. Its subcellular location is the chromosome. Its function is as follows. Core component of nucleosome. Nucleosomes wrap and compact DNA into chromatin, limiting DNA accessibility to the cellular machineries which require DNA as a template. Histones thereby play a central role in transcription regulation, DNA repair, DNA replication and chromosomal stability. DNA accessibility is regulated via a complex set of post-translational modifications of histones, also called histone code, and nucleosome remodeling. In Bos taurus (Bovine), this protein is Histone H2A type 2-C.